A 79-amino-acid polypeptide reads, in one-letter code: Conotoxin Vi6.1 (79 aa).

Positions 1 to 22 (MKLTCVLIITVLFLTASQLITA) are cleaved as a signal peptide. The propeptide occupies 23-47 (DYSRDQRQYRAVRLGDEMRNFKGAR). Cystine bridges form between C49/C62, C56/C67, and C61/C77. 4-hydroxyproline occurs at positions 60 and 63.

As to expression, expressed by the venom duct.

It localises to the secreted. In terms of biological role, ion channel inhibitor that inhibits the increase in intracellular calcium upon depolarization in DRG neurons. In vivo, both intraperitoneal and intracranial injections into mice induce hyperactivity. This is Conotoxin Vi6.1 from Conus virgo (Virgin cone).